The chain runs to 143 residues: Small ribosomal subunit protein uS9 (143 aa).

The interval Arg-123–Arg-143 is disordered. Residues Ala-134–Arg-143 are compositionally biased toward basic residues.

This sequence belongs to the universal ribosomal protein uS9 family.

The chain is Small ribosomal subunit protein uS9 (RPS16) from Eremothecium gossypii (strain ATCC 10895 / CBS 109.51 / FGSC 9923 / NRRL Y-1056) (Yeast).